Consider the following 607-residue polypeptide: Glutamine--fructose-6-phosphate aminotransferase [isomerizing] (607 aa).

C2 serves as the catalytic Nucleophile; for GATase activity. Residues C2–D217 enclose the Glutamine amidotransferase type-2 domain. 2 consecutive SIS domains span residues L283–V422 and I455–P597. K602 serves as the catalytic For Fru-6P isomerization activity.

Homodimer.

The protein localises to the cytoplasm. It carries out the reaction D-fructose 6-phosphate + L-glutamine = D-glucosamine 6-phosphate + L-glutamate. In terms of biological role, catalyzes the first step in hexosamine metabolism, converting fructose-6P into glucosamine-6P using glutamine as a nitrogen source. In Mesorhizobium japonicum (strain LMG 29417 / CECT 9101 / MAFF 303099) (Mesorhizobium loti (strain MAFF 303099)), this protein is Glutamine--fructose-6-phosphate aminotransferase [isomerizing].